The primary structure comprises 243 residues: Type III pantothenate kinase (243 aa).

6–13 (DIGNTVAK) contacts ATP. Substrate contacts are provided by residues Tyr86 and 93–96 (GYDR). The Proton acceptor role is filled by Asp95. Asp116 contributes to the K(+) binding site. An ATP-binding site is contributed by Thr119. Thr171 serves as a coordination point for substrate.

It belongs to the type III pantothenate kinase family. Homodimer. NH4(+) is required as a cofactor. K(+) serves as cofactor.

Its subcellular location is the cytoplasm. The catalysed reaction is (R)-pantothenate + ATP = (R)-4'-phosphopantothenate + ADP + H(+). It participates in cofactor biosynthesis; coenzyme A biosynthesis; CoA from (R)-pantothenate: step 1/5. Functionally, catalyzes the phosphorylation of pantothenate (Pan), the first step in CoA biosynthesis. This Bacteroides fragilis (strain ATCC 25285 / DSM 2151 / CCUG 4856 / JCM 11019 / LMG 10263 / NCTC 9343 / Onslow / VPI 2553 / EN-2) protein is Type III pantothenate kinase.